Here is a 385-residue protein sequence, read N- to C-terminus: tRNA-specific 2-thiouridylase MnmA (385 aa).

Residues 18 to 25 and Leu-44 each bind ATP; that span reads AMSGGVDS. Cys-112 functions as the Nucleophile in the catalytic mechanism. Cys-112 and Cys-209 are disulfide-bonded. Position 136 (Gly-136) interacts with ATP. Positions 159 to 161 are interaction with tRNA; sequence RDQ. Cys-209 functions as the Cysteine persulfide intermediate in the catalytic mechanism.

It belongs to the MnmA/TRMU family.

The protein localises to the cytoplasm. The enzyme catalyses S-sulfanyl-L-cysteinyl-[protein] + uridine(34) in tRNA + AH2 + ATP = 2-thiouridine(34) in tRNA + L-cysteinyl-[protein] + A + AMP + diphosphate + H(+). Functionally, catalyzes the 2-thiolation of uridine at the wobble position (U34) of tRNA, leading to the formation of s(2)U34. The sequence is that of tRNA-specific 2-thiouridylase MnmA from Methylorubrum extorquens (strain PA1) (Methylobacterium extorquens).